The following is a 614-amino-acid chain: DBH-like monooxygenase protein 1 homolog (614 aa).

Residues Met-1–Ser-22 form the signal peptide. At Gln-23 to Glu-593 the chain is on the lumenal side. The DOMON domain maps to Arg-37–His-150. N-linked (GlcNAc...) asparagine glycosylation is present at Asn-116. Residue Tyr-205 is part of the active site. 2 disulfide bridges follow: Cys-207–Cys-259 and Cys-244–Cys-271. 2 residues coordinate Cu cation: His-237 and His-238. The N-linked (GlcNAc...) asparagine glycan is linked to Asn-249. Cu cation contacts are provided by His-309, His-391, and His-393. Intrachain disulfides connect Cys-366–Cys-482, Cys-370–Cys-552, and Cys-445–Cys-467. Residue His-391 is part of the active site. N-linked (GlcNAc...) asparagine glycosylation is present at Asn-454. Met-466 serves as a coordination point for Cu cation. Residue Asn-519 is glycosylated (N-linked (GlcNAc...) asparagine). The chain crosses the membrane as a helical span at residues His-594–Leu-612.

The protein belongs to the copper type II ascorbate-dependent monooxygenase family. Cu(2+) serves as cofactor.

Its subcellular location is the endoplasmic reticulum membrane. The polypeptide is DBH-like monooxygenase protein 1 homolog (moxd1) (Danio rerio (Zebrafish)).